A 426-amino-acid polypeptide reads, in one-letter code: MPGAGSRGPSAGDGRLRLARLALVLLGWVSASAPSSSLPSSSTSPAAFLASGSAQPPPAERCPAACECSEAARTVKCVNRNLLEVPADLPPYVRNLFLTGNQMTVLPAGAFARQPPLADLAVLNLSGNHLKEVGAGAFEHLPGLRRLDLSHNPLTNLSAFTFAGSNVSVSTPSPLLELILNHIVPPEDQRQNGSFEGMVAFEGMVAAALRSGLALRGLHHLELASNHFLYLPRDLLDQLPSLKHLDLRNNSLVSLTYASFRNLTHLESLHLEDNALKVLHNSTLAEWQGLAHVRVFLDNNPWVCDCYMADMVSWLKETEVVPDKARLTCAFPEKMRNRGLLDLTSSDLDCDATLPQSLQTSYVFLGIVLALIGAIFLLVLYLNRKGIKKWMHNIRDACRDHMEGYHYRYEINADPRLTNLSSNSDV.

Positions 1–31 (MPGAGSRGPSAGDGRLRLARLALVLLGWVSA) are cleaved as a signal peptide. Over 32–361 (SAPSSSLPSS…ATLPQSLQTS (330 aa)) the chain is Extracellular. Low complexity predominate over residues 34–51 (PSSSLPSSSTSPAAFLAS). The tract at residues 34–54 (PSSSLPSSSTSPAAFLASGSA) is disordered. The region spanning 53–91 (SAQPPPAERCPAACECSEAARTVKCVNRNLLEVPADLPP) is the LRRNT domain. Disulfide bonds link Cys-62-Cys-68 and Cys-66-Cys-77. LRR repeat units follow at residues 92 to 113 (YVRN…AFAR), 116 to 139 (PLAD…GAFE), and 141 to 163 (LPGL…FTFA). Asn-124 carries an N-linked (GlcNAc...) asparagine glycan. Asn-166 is a glycosylation site (N-linked (GlcNAc...) asparagine). 4 LRR repeats span residues 172 to 210 (PSPL…AALR), 215 to 238 (LRGL…LLDQ), 239 to 261 (LPSL…ASFR), and 262 to 281 (NLTH…VLHN). Residue Asn-281 is glycosylated (N-linked (GlcNAc...) asparagine). Positions 289-352 (GLAHVRVFLD…LTSSDLDCDA (64 aa)) constitute an LRRCT domain. Disulfide bonds link Cys-304/Cys-329 and Cys-306/Cys-350. The helical transmembrane segment at 362 to 382 (YVFLGIVLALIGAIFLLVLYL) threads the bilayer. At 383 to 426 (NRKGIKKWMHNIRDACRDHMEGYHYRYEINADPRLTNLSSNSDV) the chain is on the cytoplasmic side. Ser-424 carries the phosphoserine modification.

In terms of processing, highly glycosylated.

Its subcellular location is the cell membrane. In terms of biological role, may function as an inhibitor of Wnt/beta-catenin signaling by indirectly interacting with LRP6 and blocking Wnt3a-dependent LRP6 internalization. This chain is Trophoblast glycoprotein (Tpbg), found in Rattus norvegicus (Rat).